The sequence spans 239 residues: Ribonuclease PH (239 aa).

Phosphate-binding positions include Arg-86 and Gly-124 to Arg-126.

It belongs to the RNase PH family. As to quaternary structure, homohexameric ring arranged as a trimer of dimers.

The catalysed reaction is tRNA(n+1) + phosphate = tRNA(n) + a ribonucleoside 5'-diphosphate. Phosphorolytic 3'-5' exoribonuclease that plays an important role in tRNA 3'-end maturation. Removes nucleotide residues following the 3'-CCA terminus of tRNAs; can also add nucleotides to the ends of RNA molecules by using nucleoside diphosphates as substrates, but this may not be physiologically important. Probably plays a role in initiation of 16S rRNA degradation (leading to ribosome degradation) during starvation. The chain is Ribonuclease PH from Rickettsia africae (strain ESF-5).